Reading from the N-terminus, the 270-residue chain is Regulatory protein RecX (270 aa).

It belongs to the RecX family.

Its subcellular location is the cytoplasm. In terms of biological role, modulates RecA activity. The protein is Regulatory protein RecX of Bacillus mycoides (strain KBAB4) (Bacillus weihenstephanensis).